Here is a 251-residue protein sequence, read N- to C-terminus: Vacuolar protein sorting-associated protein 37D (251 aa).

Residues 93–182 form the VPS37 C-terminal domain; sequence AENCADKLQR…RRRERSAQPA (90 aa). Residues 174–251 form a disordered region; that stretch reads RRERSAQPAP…RPSQPEPPHR (78 aa). Positions 221–251 are enriched in pro residues; the sequence is PVPPLKGSPGCPLGPAPLLSPRPSQPEPPHR.

It belongs to the VPS37 family. Component of the ESCRT-I complex (endosomal sorting complex required for transport I) which consists of TSG101, VPS28, a VPS37 protein (VPS37A to -D) and MVB12A or MVB12B in a 1:1:1:1 stoichiometry. Interacts with TSG101 and MVB12A. Component of the ESCRT-I complex (endosomal sorting complex required for transport I) which consists of TSG101, VPS28, a VPS37 protein (VPS37A to -D) and UBAP1 in a 1:1:1:1 stoichiometry.

It localises to the late endosome membrane. Its function is as follows. Component of the ESCRT-I complex, a regulator of vesicular trafficking process. Required for the sorting of endocytic ubiquitinated cargos into multivesicular bodies. May be involved in cell growth and differentiation. In Homo sapiens (Human), this protein is Vacuolar protein sorting-associated protein 37D.